Here is a 511-residue protein sequence, read N- to C-terminus: Histidine ammonia-lyase (511 aa).

A cross-link (5-imidazolinone (Ala-Gly)) is located at residues 143-145 (ASG). Ser144 is subject to 2,3-didehydroalanine (Ser).

Belongs to the PAL/histidase family. Post-translationally, contains an active site 4-methylidene-imidazol-5-one (MIO), which is formed autocatalytically by cyclization and dehydration of residues Ala-Ser-Gly.

It localises to the cytoplasm. It catalyses the reaction L-histidine = trans-urocanate + NH4(+). It participates in amino-acid degradation; L-histidine degradation into L-glutamate; N-formimidoyl-L-glutamate from L-histidine: step 1/3. The chain is Histidine ammonia-lyase from Vibrio cholerae serotype O1 (strain ATCC 39315 / El Tor Inaba N16961).